A 380-amino-acid polypeptide reads, in one-letter code: Bifunctional dihydropteroate synthase/dihydropteroate reductase (380 aa).

The dihydropteroate reductase stretch occupies residues Met-1 to Ala-104. The tract at residues Gln-105–Asp-380 is dihydropteroate synthase. The Pterin-binding domain occupies Pro-119–Lys-371. Asn-126 serves as a coordination point for Mg(2+). Residues Asp-202, Asn-221, Asp-289, Lys-325, and Arg-359–His-361 each bind (7,8-dihydropterin-6-yl)methyl diphosphate.

In the C-terminal section; belongs to the DHPS family. FAD is required as a cofactor. Requires FMN as cofactor. The cofactor is Mg(2+).

It carries out the reaction (7,8-dihydropterin-6-yl)methyl diphosphate + 4-aminobenzoate = 7,8-dihydropteroate + diphosphate. The enzyme catalyses (6S)-5,6,7,8-tetrahydropteroate + NAD(+) = 7,8-dihydropteroate + NADH + H(+). It participates in cofactor biosynthesis; tetrahydrofolate biosynthesis; 7,8-dihydrofolate from 2-amino-4-hydroxy-6-hydroxymethyl-7,8-dihydropteridine diphosphate and 4-aminobenzoate: step 1/2. In terms of biological role, bifunctional enzyme that catalyzes the formation of dihydropteroate, the immediate precursor of folic acid and the reduction of dihydropteroate to tetrahydropteroate. This chain is Bifunctional dihydropteroate synthase/dihydropteroate reductase, found in Helicobacter pylori (strain ATCC 700392 / 26695) (Campylobacter pylori).